A 349-amino-acid polypeptide reads, in one-letter code: 11-beta-hydroxysteroid dehydrogenase 1A (349 aa).

Residues 10–30 (LTAPFFTFFGLCFFLPPFYFF) form a helical; Signal-anchor for type II membrane protein membrane-spanning segment. Residues 54-80 (GASS…TARR) and aspartate 105 contribute to the NADP(+) site. Serine 184 is a binding site for substrate. Tyrosine 197 (proton acceptor) is an active-site residue. NADP(+) contacts are provided by residues 197–201 (YNASK) and lysine 201.

This sequence belongs to the short-chain dehydrogenases/reductases (SDR) family. As to expression, expressed in the above-ground part of seedlings, especially in the vascular tissues. Also detected in the buds and silique pedicels. Highly induced in oil-accumulating tissues of maturing seeds.

The protein localises to the lipid droplet. It localises to the membrane. It catalyses the reaction an 11beta-hydroxysteroid + NADP(+) = an 11-oxosteroid + NADPH + H(+). It carries out the reaction 17beta-estradiol + NADP(+) = estrone + NADPH + H(+). The catalysed reaction is corticosterone + NADP(+) = 11-dehydrocorticosterone + NADPH + H(+). The enzyme catalyses cortisone + NADPH + H(+) = cortisol + NADP(+). Functionally, catalyzes 11-beta, 17-beta-hydroxysteroid and reduces 17-beta-ketosteroids. Involved in regulating plant growth and development, probably promoting or mediating brassinosteroid effects. Plays a role during seed maturation. This is 11-beta-hydroxysteroid dehydrogenase 1A (HSD1) from Arabidopsis thaliana (Mouse-ear cress).